The chain runs to 446 residues: Solute carrier family 52, riboflavin transporter, member 2 (446 aa).

4 consecutive transmembrane segments (helical) span residues 14 to 34 (LLVA…WVEL), 47 to 67 (LPSY…VVTL), 79 to 99 (APIQ…APLW), and 104 to 124 (VMAG…LALA). N129 carries N-linked (GlcNAc...) asparagine glycosylation. Transmembrane regions (helical) follow at residues 147-167 (FFLG…GQGV) and 196-216 (FFGA…GLLL). The interval 228 to 267 (GSGTGLRGGAPGVEEEEEEEASPLQEPPSQAAGNTPSPDP) is disordered. Positions 229 to 238 (SGTGLRGGAP) are enriched in gly residues. The span at 254–263 (PPSQAAGNTP) shows a compositional bias: polar residues. The next 5 helical transmembrane spans lie at 278–298 (ACLL…LPAV), 313–333 (LAVV…MGIL), 340–360 (LGGL…LAIL), 367–387 (VGTS…LGVF), and 405–425 (ALLA…VTMF).

This sequence belongs to the riboflavin transporter family.

The protein resides in the cell membrane. It catalyses the reaction riboflavin(in) = riboflavin(out). With respect to regulation, riboflavin transport is Na(+)-independent but moderately pH-sensitive. Activity is strongly inhibited by riboflavin analogs, such as lumiflavin. Weakly inhibited by flavin adenine dinucleotide (FAD) and flavin mononucleotide (FMN). Functionally, plasma membrane transporter mediating the uptake by cells of the water soluble vitamin B2/riboflavin that plays a key role in biochemical oxidation-reduction reactions of the carbohydrate, lipid, and amino acid metabolism. May also act as a receptor for 4-hydroxybutyrate. In terms of biological role, (Microbial infection) In case of infection by porcine endogenous retrovirus (PERV-A), acts as a cell receptor to retroviral envelopes. This Sus scrofa (Pig) protein is Solute carrier family 52, riboflavin transporter, member 2 (SLC52A2).